A 258-amino-acid chain; its full sequence is PHD finger protein ALFIN-LIKE 1 (258 aa).

The span at 1–10 shows a compositional bias: basic and acidic residues; sequence MDASYRRDGR. Disordered stretches follow at residues 1 to 24 and 150 to 200; these read MDAS…SAPR and SGSR…DGDH. Positions 11–21 are enriched in gly residues; the sequence is GGGGGGGGGGS. Residues 175–187 are compositionally biased toward basic and acidic residues; the sequence is HTSDVARVENNIK. Positions 188 to 199 are enriched in acidic residues; that stretch reads EEDEGYDEDDGD. Residues 202 to 254 form a PHD-type zinc finger; the sequence is ETLCGTCGGIYSADEFWIGCDVCERWYHGKCVKITPAKAESIKQYKCPSCSSK.

Belongs to the Alfin family. As to quaternary structure, interacts with H3K4me3 and to a lesser extent with H3K4me2.

It is found in the nucleus. Its function is as follows. Histone-binding component that specifically recognizes H3 tails trimethylated on 'Lys-4' (H3K4me3), which mark transcription start sites of virtually all active genes. In Oryza sativa subsp. indica (Rice), this protein is PHD finger protein ALFIN-LIKE 1.